We begin with the raw amino-acid sequence, 193 residues long: Phosphoheptose isomerase (193 aa).

In terms of domain architecture, SIS spans 37 to 193; sequence LADSFKAGGK…QLIEKEMVKA (157 aa). 52-54 is a binding site for substrate; it reads NGG. Zn(2+) contacts are provided by histidine 61 and glutamate 65. Residues glutamate 65, 93–94, 119–121, serine 124, and glutamine 172 each bind substrate; these read ND and STS. Zn(2+)-binding residues include glutamine 172 and histidine 180.

This sequence belongs to the SIS family. GmhA subfamily. As to quaternary structure, homotetramer. The cofactor is Zn(2+).

Its subcellular location is the cytoplasm. It carries out the reaction 2 D-sedoheptulose 7-phosphate = D-glycero-alpha-D-manno-heptose 7-phosphate + D-glycero-beta-D-manno-heptose 7-phosphate. The protein operates within carbohydrate biosynthesis; D-glycero-D-manno-heptose 7-phosphate biosynthesis; D-glycero-alpha-D-manno-heptose 7-phosphate and D-glycero-beta-D-manno-heptose 7-phosphate from sedoheptulose 7-phosphate: step 1/1. Functionally, catalyzes the isomerization of sedoheptulose 7-phosphate in D-glycero-D-manno-heptose 7-phosphate. The sequence is that of Phosphoheptose isomerase from Yersinia enterocolitica serotype O:8 / biotype 1B (strain NCTC 13174 / 8081).